The chain runs to 442 residues: 26S proteasome non-ATPase regulatory subunit 12 homolog A (442 aa).

The stretch at 6–137 (KLEATIDRLL…EAADLMQEVA (132 aa)) forms a coiled coil. In terms of domain architecture, PCI spans 232–403 (EICRSYKAIY…GIVCFQIAKD (172 aa)).

This sequence belongs to the proteasome subunit p55 family. In terms of assembly, component of the 19S regulatory particle (RP/PA700) lid subcomplex of the 26S proteasome. The 26S proteasome is composed of a core protease (CP), known as the 20S proteasome, capped at one or both ends by the 19S regulatory particle (RP/PA700). The RP/PA700 complex is composed of at least 17 different subunits in two subcomplexes, the base and the lid, which form the portions proximal and distal to the 20S proteolytic core, respectively. As to expression, ubiquitous with highest expression in flowers.

The protein localises to the cytoplasm. It is found in the nucleus. Its function is as follows. Acts as a regulatory subunit of the 26 proteasome which is involved in the ATP-dependent degradation of ubiquitinated proteins. Required for gametogenesis and sporophyte development. Acts redundantly with RPN5B. The protein is 26S proteasome non-ATPase regulatory subunit 12 homolog A (RPN5A) of Arabidopsis thaliana (Mouse-ear cress).